The chain runs to 347 residues: Selenide, water dikinase (347 aa).

Cys-16 is a catalytic residue. Residues Lys-19 and Thr-47–Asp-49 contribute to the ATP site. Mg(2+) is bound at residue Asp-50. ATP is bound by residues Asp-67, Asp-90, and Gly-138 to Ser-140. Residue Asp-90 participates in Mg(2+) binding. A Mg(2+)-binding site is contributed by Asp-226.

Belongs to the selenophosphate synthase 1 family. Class I subfamily. In terms of assembly, homodimer. The cofactor is Mg(2+).

The enzyme catalyses hydrogenselenide + ATP + H2O = selenophosphate + AMP + phosphate + 2 H(+). Its function is as follows. Synthesizes selenophosphate from selenide and ATP. The chain is Selenide, water dikinase from Photorhabdus laumondii subsp. laumondii (strain DSM 15139 / CIP 105565 / TT01) (Photorhabdus luminescens subsp. laumondii).